The chain runs to 49 residues: Thymopoietin-1 (49 aa).

The region spanning 4-47 (LEDPSVLTKEKLKSELVANNVTLPAGEQRKDVYVELYLQHLTAL) is the LEM-like domain. The interval 32 to 36 (RKDVY) is biological activity.

This sequence belongs to the thymopoietin family.

In terms of biological role, hormone of the thymus with pleiotropic actions on prothymocytes, mature T-cells, the nicotinic acetylcholine receptor, and pituitary corticotrophs. This chain is Thymopoietin-1, found in Bos taurus (Bovine).